The chain runs to 389 residues: Succinate--CoA ligase [ADP-forming] subunit beta (389 aa).

Positions 9 to 244 (KEILRKFGVA…LDEEDPAEVE (236 aa)) constitute an ATP-grasp domain. ATP contacts are provided by residues K46, 53 to 55 (GRG), E99, A102, and E107. Mg(2+) is bound by residues N199 and D213. Substrate is bound by residues N264 and 321-323 (GIM).

The protein belongs to the succinate/malate CoA ligase beta subunit family. In terms of assembly, heterotetramer of two alpha and two beta subunits. Mg(2+) is required as a cofactor.

It carries out the reaction succinate + ATP + CoA = succinyl-CoA + ADP + phosphate. The enzyme catalyses GTP + succinate + CoA = succinyl-CoA + GDP + phosphate. It functions in the pathway carbohydrate metabolism; tricarboxylic acid cycle; succinate from succinyl-CoA (ligase route): step 1/1. Functionally, succinyl-CoA synthetase functions in the citric acid cycle (TCA), coupling the hydrolysis of succinyl-CoA to the synthesis of either ATP or GTP and thus represents the only step of substrate-level phosphorylation in the TCA. The beta subunit provides nucleotide specificity of the enzyme and binds the substrate succinate, while the binding sites for coenzyme A and phosphate are found in the alpha subunit. This chain is Succinate--CoA ligase [ADP-forming] subunit beta, found in Paraburkholderia phytofirmans (strain DSM 17436 / LMG 22146 / PsJN) (Burkholderia phytofirmans).